Here is a 556-residue protein sequence, read N- to C-terminus: 2-succinyl-5-enolpyruvyl-6-hydroxy-3-cyclohexene-1-carboxylate synthase (556 aa).

This sequence belongs to the TPP enzyme family. MenD subfamily. As to quaternary structure, homodimer. Requires Mg(2+) as cofactor. Mn(2+) serves as cofactor. It depends on thiamine diphosphate as a cofactor.

The catalysed reaction is isochorismate + 2-oxoglutarate + H(+) = 5-enolpyruvoyl-6-hydroxy-2-succinyl-cyclohex-3-ene-1-carboxylate + CO2. The protein operates within quinol/quinone metabolism; 1,4-dihydroxy-2-naphthoate biosynthesis; 1,4-dihydroxy-2-naphthoate from chorismate: step 2/7. Its pathway is quinol/quinone metabolism; menaquinone biosynthesis. Functionally, catalyzes the thiamine diphosphate-dependent decarboxylation of 2-oxoglutarate and the subsequent addition of the resulting succinic semialdehyde-thiamine pyrophosphate anion to isochorismate to yield 2-succinyl-5-enolpyruvyl-6-hydroxy-3-cyclohexene-1-carboxylate (SEPHCHC). The polypeptide is 2-succinyl-5-enolpyruvyl-6-hydroxy-3-cyclohexene-1-carboxylate synthase (Salmonella agona (strain SL483)).